The chain runs to 167 residues: MLPMITEFINYGQQTIRAARYIGQGFMITLSHANRLPVTIQYPYEKLITSERFRGRIHFEFDKCIACEVCVRVCPIDLPVVDWKLETDIRKKRLLNYSIDFGICIFCGNCVEYCPTNCLSMTEEYELSTYDRHELNYNQIALGRLPMSVIDDYTIRTISNLPQINNE.

4Fe-4S ferredoxin-type domains follow at residues 55–84 and 95–124; these read GRIH…VDWK and LNYS…MTEE. [4Fe-4S] cluster-binding residues include cysteine 64, cysteine 67, cysteine 70, cysteine 74, cysteine 104, cysteine 107, cysteine 110, and cysteine 114.

Belongs to the complex I 23 kDa subunit family. NDH is composed of at least 16 different subunits, 5 of which are encoded in the nucleus. The cofactor is [4Fe-4S] cluster.

The protein resides in the plastid. Its subcellular location is the chloroplast thylakoid membrane. The enzyme catalyses a plastoquinone + NADH + (n+1) H(+)(in) = a plastoquinol + NAD(+) + n H(+)(out). It carries out the reaction a plastoquinone + NADPH + (n+1) H(+)(in) = a plastoquinol + NADP(+) + n H(+)(out). Functionally, NDH shuttles electrons from NAD(P)H:plastoquinone, via FMN and iron-sulfur (Fe-S) centers, to quinones in the photosynthetic chain and possibly in a chloroplast respiratory chain. The immediate electron acceptor for the enzyme in this species is believed to be plastoquinone. Couples the redox reaction to proton translocation, and thus conserves the redox energy in a proton gradient. The chain is NAD(P)H-quinone oxidoreductase subunit I, chloroplastic from Solanum tuberosum (Potato).